Here is a 217-residue protein sequence, read N- to C-terminus: NADPH-dependent 3-demethoxyubiquinone 3-hydroxylase, mitochondrial (217 aa).

Tandem repeats lie at residues 48 to 129 (AVDQ…TALL) and 130 to 217 (GKEG…SERF). The interval 48–217 (AVDQIIRVDH…SAAIYLSERF (170 aa)) is 2 X approximate tandem repeats. 6 residues coordinate Fe cation: Glu-60, Glu-90, His-93, Glu-142, Glu-178, and His-181. Residues Tyr-212 and Arg-216 each coordinate NADH.

This sequence belongs to the COQ7 family. As to quaternary structure, component of a multi-subunit COQ enzyme complex. Interacts with COQ8B and COQ6. Interacts with COQ9. The cofactor is Fe cation.

The protein resides in the mitochondrion inner membrane. It catalyses the reaction a 5-methoxy-2-methyl-3-(all-trans-polyprenyl)benzoquinone + NADH + O2 = a 3-demethylubiquinone + NAD(+) + H2O. It participates in cofactor biosynthesis; ubiquinone biosynthesis. In terms of biological role, catalyzes the hydroxylation of the 5-methoxy-2-methyl-3-(all-trans-polyprenyl)benzoquinone at the C6 position and participates in the biosynthesis of ubiquinone. Catalyzes the reaction through a substrate-mediated reduction pathway, whereby NADH shuttles electrons to 5-methoxy-2-methyl-3-(all-trans-decaprenyl)benzoquinone, which then transfers the electrons to the two Fe(3+) centers. The binding of 5-methoxy-2-methyl-3-(all-trans-polyprenyl)benzoquinone (DMQn) mediates reduction of the diiron center by nicotinamide adenine dinucleotide (NADH) and initiates oxygen activation for subsequent DMQ hydroxylation. The physiological substrates are 5-methoxy-2-methyl-3-(all-trans-nonaprenyl)benzoquinone (DMQ(9)) and 5-methoxy-2-methyl-3-(all-trans-decaprenyl)benzoquinone (DMQ(10)), however in vitro the enzyme does not have any specificity concerning the length of the polyprenyl tail, and accepts tails of various lengths with similar efficiency. Also has a structural role in the COQ enzyme complex, stabilizing other COQ polypeptides. Involved in lifespan determination in a ubiquinone-independent manner. Plays a role in modulating mitochondrial stress responses, acting in the nucleus, perhaps via regulating gene expression, independent of its characterized mitochondrial function in ubiquinone biosynthesis. The sequence is that of NADPH-dependent 3-demethoxyubiquinone 3-hydroxylase, mitochondrial from Rattus norvegicus (Rat).